A 260-amino-acid polypeptide reads, in one-letter code: 5'-nucleotidase SurE (260 aa).

Positions 8, 9, 39, and 91 each coordinate a divalent metal cation.

It belongs to the SurE nucleotidase family. A divalent metal cation serves as cofactor.

The protein localises to the cytoplasm. It catalyses the reaction a ribonucleoside 5'-phosphate + H2O = a ribonucleoside + phosphate. In terms of biological role, nucleotidase that shows phosphatase activity on nucleoside 5'-monophosphates. The protein is 5'-nucleotidase SurE of Acidovorax ebreus (strain TPSY) (Diaphorobacter sp. (strain TPSY)).